The following is a 256-amino-acid chain: Thiazole synthase (256 aa).

Catalysis depends on Lys96, which acts as the Schiff-base intermediate with DXP. 1-deoxy-D-xylulose 5-phosphate is bound by residues Gly157, Ala184–Gly185, and Asn206–Thr207.

The protein belongs to the ThiG family. As to quaternary structure, homotetramer. Forms heterodimers with either ThiH or ThiS.

Its subcellular location is the cytoplasm. It catalyses the reaction [ThiS sulfur-carrier protein]-C-terminal-Gly-aminoethanethioate + 2-iminoacetate + 1-deoxy-D-xylulose 5-phosphate = [ThiS sulfur-carrier protein]-C-terminal Gly-Gly + 2-[(2R,5Z)-2-carboxy-4-methylthiazol-5(2H)-ylidene]ethyl phosphate + 2 H2O + H(+). Its pathway is cofactor biosynthesis; thiamine diphosphate biosynthesis. Its function is as follows. Catalyzes the rearrangement of 1-deoxy-D-xylulose 5-phosphate (DXP) to produce the thiazole phosphate moiety of thiamine. Sulfur is provided by the thiocarboxylate moiety of the carrier protein ThiS. In vitro, sulfur can be provided by H(2)S. In Bartonella tribocorum (strain CIP 105476 / IBS 506), this protein is Thiazole synthase.